The primary structure comprises 255 residues: Probable septum site-determining protein MinC (255 aa).

Residues 103–115 show a composition bias toward basic and acidic residues; it reads SHGRRPRGERSEE. The tract at residues 103–136 is disordered; it reads SHGRRPRGERSEEAAEAVPAAAEPVPAPAASPAP. Positions 127–136 are enriched in pro residues; it reads VPAPAASPAP.

It belongs to the MinC family. In terms of assembly, interacts with MinD and FtsZ.

Its function is as follows. Cell division inhibitor that blocks the formation of polar Z ring septums. Rapidly oscillates between the poles of the cell to destabilize FtsZ filaments that have formed before they mature into polar Z rings. Prevents FtsZ polymerization. This Ralstonia nicotianae (strain ATCC BAA-1114 / GMI1000) (Ralstonia solanacearum) protein is Probable septum site-determining protein MinC.